A 486-amino-acid polypeptide reads, in one-letter code: L-arabinose isomerase (486 aa).

Mn(2+) contacts are provided by Glu299, Glu324, His341, and His440.

It belongs to the arabinose isomerase family. The cofactor is Mn(2+).

It catalyses the reaction beta-L-arabinopyranose = L-ribulose. It functions in the pathway carbohydrate degradation; L-arabinose degradation via L-ribulose; D-xylulose 5-phosphate from L-arabinose (bacterial route): step 1/3. In terms of biological role, catalyzes the conversion of L-arabinose to L-ribulose. This chain is L-arabinose isomerase, found in Shouchella clausii (strain KSM-K16) (Alkalihalobacillus clausii).